A 474-amino-acid chain; its full sequence is MKLSMPRFDQAPVLVVGDVMLDRYWHGGTSRISPEAPVPVVKVDQIEDRPGGAANVALNIAALGAPASLVGVTGDDEAAESLTNSLKAAGVLARFQRIADQPTIVKLRVMSRHQQLLRIDFEEPFRTDPLALSAEVYSLLDGIKVLVLSDYGKGALKNHQALIQAARKRGIPVLADPKGKDFAIYRGASLITPNLSEFEAIVGHCVDEAQLVTKGAQLMQELDLGALLVTRGEHGMTLLRPDQQALHLPARAREVFDVTGAGDTVISTLAAAIAAGEELPHAVALANLAAGIVVGKLGTAAISAPELRRAIQREEGSERGVLGLEQLLLAVDDARAHKERIVFTNGCFDILHAGHVTYLEQARALGDRLIVAVNDDASVSRLKGPGRPINSVERRMAVLAGLGAVDWVISFPEGTPENLLTHVKPDVLVKGGDYGVDQVVGADIVQAYGGEVRVLGLVENSSTTAIVEKIRGQG.

The interval 1-318 (MKLSMPRFDQ…RAIQREEGSE (318 aa)) is ribokinase. Position 194–197 (194–197 (NLSE)) interacts with ATP. Asp263 is an active-site residue. The cytidylyltransferase stretch occupies residues 343 to 474 (FTNGCFDILH…AIVEKIRGQG (132 aa)).

The protein in the N-terminal section; belongs to the carbohydrate kinase PfkB family. This sequence in the C-terminal section; belongs to the cytidylyltransferase family. As to quaternary structure, homodimer.

It carries out the reaction D-glycero-beta-D-manno-heptose 7-phosphate + ATP = D-glycero-beta-D-manno-heptose 1,7-bisphosphate + ADP + H(+). It catalyses the reaction D-glycero-beta-D-manno-heptose 1-phosphate + ATP + H(+) = ADP-D-glycero-beta-D-manno-heptose + diphosphate. The protein operates within nucleotide-sugar biosynthesis; ADP-L-glycero-beta-D-manno-heptose biosynthesis; ADP-L-glycero-beta-D-manno-heptose from D-glycero-beta-D-manno-heptose 7-phosphate: step 1/4. It participates in nucleotide-sugar biosynthesis; ADP-L-glycero-beta-D-manno-heptose biosynthesis; ADP-L-glycero-beta-D-manno-heptose from D-glycero-beta-D-manno-heptose 7-phosphate: step 3/4. In terms of biological role, catalyzes the phosphorylation of D-glycero-D-manno-heptose 7-phosphate at the C-1 position to selectively form D-glycero-beta-D-manno-heptose-1,7-bisphosphate. Functionally, catalyzes the ADP transfer from ATP to D-glycero-beta-D-manno-heptose 1-phosphate, yielding ADP-D-glycero-beta-D-manno-heptose. The polypeptide is Bifunctional protein HldE (Pseudomonas syringae pv. syringae (strain B728a)).